Reading from the N-terminus, the 443-residue chain is Probable D-serine dehydratase (443 aa).

Lys-118 is subject to N6-(pyridoxal phosphate)lysine.

It belongs to the serine/threonine dehydratase family. DsdA subfamily. Pyridoxal 5'-phosphate serves as cofactor.

The enzyme catalyses D-serine = pyruvate + NH4(+). The polypeptide is Probable D-serine dehydratase (Colwellia psychrerythraea (strain 34H / ATCC BAA-681) (Vibrio psychroerythus)).